Consider the following 458-residue polypeptide: ATP synthase subunit beta (458 aa).

Residue 148–155 (GGAGVGKT) participates in ATP binding.

Belongs to the ATPase alpha/beta chains family. F-type ATPases have 2 components, CF(1) - the catalytic core - and CF(0) - the membrane proton channel. CF(1) has five subunits: alpha(3), beta(3), gamma(1), delta(1), epsilon(1). CF(0) has three main subunits: a(1), b(2) and c(9-12). The alpha and beta chains form an alternating ring which encloses part of the gamma chain. CF(1) is attached to CF(0) by a central stalk formed by the gamma and epsilon chains, while a peripheral stalk is formed by the delta and b chains.

The protein localises to the cell inner membrane. The catalysed reaction is ATP + H2O + 4 H(+)(in) = ADP + phosphate + 5 H(+)(out). Its function is as follows. Produces ATP from ADP in the presence of a proton gradient across the membrane. The catalytic sites are hosted primarily by the beta subunits. In Pseudomonas fluorescens (strain SBW25), this protein is ATP synthase subunit beta.